The primary structure comprises 212 residues: MPGRFELKPTLEKVWHAPDNFRFMDPLPPMHRRGIIIAAIVLVVGFLLPSDDTPNAPVVTREAQLDIQSQSQPPTEEQLRAQLVTPQNDPDQVAPVAPEPIQEGQPEEQPQTTQTQPFQPDSGIDNQWRSYRVEPGKTMAQLFRDHGLPATDVYAMAQVEGAGKPLSNLQNGQMVKIRQNASGVVTGLTIDTGNNQQVLFTRQPDGSFIRAR.

Residues 34–50 (GIIIAAIVLVVGFLLPS) form a helical membrane-spanning segment. The interval 88 to 127 (NDPDQVAPVAPEPIQEGQPEEQPQTTQTQPFQPDSGIDNQ) is disordered. A compositionally biased stretch (low complexity) spans 99-120 (EPIQEGQPEEQPQTTQTQPFQP). The interval 117–212 (PFQPDSGIDN…QPDGSFIRAR (96 aa)) is oapA.

This sequence belongs to the OapA family.

It localises to the cell inner membrane. Cell division protein whose function is related to the generation of a transient cell wall structure. Function is linked to the late stages of cell division. The polypeptide is Cell division protein YtfB (ytfB) (Escherichia coli (strain K12)).